A 2383-amino-acid polypeptide reads, in one-letter code: Highly reducing polyketide synthase SAT13 (2383 aa).

The Ketosynthase family 3 (KS3) domain maps to 6–433 (PVPLAIVGIA…GTNAHAVLER (428 aa)). Catalysis depends on for beta-ketoacyl synthase activity residues C180, H315, and H355. The malonyl-CoA:ACP transacylase (MAT) domain stretch occupies residues 536-828 (FIFTGQGAQW…IGPHSALAGP (293 aa)). S626 (for malonyltransferase activity) is an active-site residue. Positions 922-1062 (HDLLGLRMTE…GNIVVVFKTS (141 aa)) are N-terminal hotdog fold. The interval 922-1239 (HDLLGLRMTE…GMELRSFVAR (318 aa)) is dehydratase (DH) domain. The region spanning 922-1242 (HDLLGLRMTE…LRSFVARDSN (321 aa)) is the PKS/mFAS DH domain. Residue H954 is the Proton acceptor; for dehydratase activity of the active site. The segment at 1087–1242 (GKLTHAGQLY…LRSFVARDSN (156 aa)) is C-terminal hotdog fold. The Proton donor; for dehydratase activity role is filled by D1152. The interval 1669–1977 (DGQNRLVFVE…KQGSMKKCVL (309 aa)) is enoylreductase (ER) domain. The interval 2001–2184 (ATYVVAGGLG…MSLNIGGIKD (184 aa)) is catalytic ketoreductase (KRc) domain. The Carrier domain maps to 2287-2364 (EISEFVARSI…DLAQKVVSRS (78 aa)). S2324 carries the O-(pantetheine 4'-phosphoryl)serine modification.

Its pathway is mycotoxin biosynthesis. In terms of biological role, highly reducing polyketide synthase; part of the satratoxin SC2 cluster involved in the biosynthesis of satratoxins, trichothecene mycotoxins that are associated with human food poisonings. Satratoxins are suggested to be made by products of multiple gene clusters (SC1, SC2 and SC3) that encode 21 proteins in all, including polyketide synthases, acetyltransferases, and other enzymes expected to modify the trichothecene skeleton. SC1 encodes 10 proteins, SAT1 to SAT10. The largest are SAT8, which encodes a putative polyketide synthase (PKS) with a conventional non-reducing architecture, and SAT10, a putative protein containing four ankyrin repeats and thus may be involved in protein scaffolding. The putative short-chain reductase SAT3 may assist the PKS in some capacity. SAT6 contains a secretory lipase domain and acts probably as a trichothecene esterase. SAT5 encodes a putative acetyltransferase, and so, with SAT6, may affect endogenous protection from toxicity. The probable transcription factor SAT9 may regulate the expression of the SC1 cluster. SC2 encodes proteins SAT11 to SAT16, the largest of which encodes the putative reducing PKS SAT13. SAT11 is a cytochrome P450 monooxygenase, while SAT14 and SAT16 are probable acetyltransferases. The SC2 cluster may be regulated by the transcription factor SAT15. SC3 is a small cluster that encodes 5 proteins, SAT17 to SAT21. SAT21 is a putative MFS-type transporter which may have a role in exporting secondary metabolites. The four other proteins putatively encoded in SC3 include the taurine hydroxylase-like protein SAT17, the O-methyltransferase SAT18, the acetyltransferase SAT19, and the Cys6-type zinc finger SAT20, the latter being probably involved in regulation of SC3 expression. The chain is Highly reducing polyketide synthase SAT13 from Stachybotrys chartarum (strain CBS 109288 / IBT 7711) (Toxic black mold).